A 6548-amino-acid polypeptide reads, in one-letter code: Epiplakin (6548 aa).

T33 bears the Phosphothreonine mark. Plectin repeat units follow at residues 41-78, 79-116, 117-154, 155-192, 285-322, 323-360, 362-398, 399-436, and 437-470; these read AALP…TGLG, LTLL…LELK, EKLL…RTLG, WRLL…KETW, RRYL…KGIA, LQLL…PELH, QLLV…QPLA, LRLL…EETR, and QRLS…PETG. Positions 49–1123 are interaction with KRT5; it reads SIAGVYVEAS…KASGLHLLPL (1075 aa). A coiled-coil region spans residues 545–565; it reads SVEELAAELKNIVEQAAATAK. 5 Plectin repeats span residues 611–648, 649–686, 687–724, 725–762, and 766–800; these read QRYL…PGTA, LILL…PDVY, AKLL…RDHG, IRLL…QILN, and LDPS…SETG. Residues 851 to 886 are a coiled coil; it reads TEDRRRQLLQRYRQRKITLEQVTQLLEKEMRRWTDI. Plectin repeat units lie at residues 931 to 968, 969 to 1006, 1007 to 1044, 1224 to 1284, 1285 to 1322, 1323 to 1360, 1361 to 1398, and 1402 to 1436; these read HRYL…PSTA, LALL…AEVY, GKLK…VEQA, QETL…TGLG, QQLL…MEQS, EHLR…QSEA, FPLL…EQTS, and TATG…ADTG. T1551 is modified (phosphothreonine). Plectin repeat units follow at residues 1572–1609, 1610–1647, 1648–1685, 1686–1723, and 1727–1761; these read RRSL…PGTA, LVLL…KETY, MKLL…RDHG, IRLL…EEMN, and SDPS…PETG. The segment at 1580–6545 is interaction with KRT5; that stretch reads FIAGVLIQDT…PETGLLFLSL (4966 aa). A coiled-coil region spans residues 1819–1851; sequence RKLLREYRAQNIGLENLLEVITSTVEETEKQSQ. Plectin repeat units follow at residues 1898–1935, 1936–1973, 1974–2011, 2012–2049, 2225–2267, 2268–2305, 2306–2343, 2344–2381, and 2385–2419; these read RVYL…AGFA, AQML…EDLR, ERLV…REEA, LRLL…DDSL, KRYL…PGTA, LVLL…GEIQ, EKLL…RDHG, IRLL…EDMN, and ADPG…PETG. Residues S2430 and S2508 each carry the phosphoserine modification. The disordered stretch occupies residues 2578-2626; sequence AEETQESKPKPRDASLKQQDTGARGSGTSPDEGDAQDSSESARQQQEQT. Residues 2582–2592 are compositionally biased toward basic and acidic residues; that stretch reads QESKPKPRDAS. Polar residues-rich tracts occupy residues 2593–2606 and 2615–2626; these read LKQQ…SGTS and SSESARQQQEQT. Plectin repeat units follow at residues 2740-2782, 2783-2820, 2821-2858, 2859-2896, and 2900-2934; these read KRYL…PGTA, LVLL…GEIQ, EKLL…RDHG, IRLL…EDMN, and ADPG…PETG. Residues 2748-2940 form an interaction with KRT14 region; the sequence is CIAGVLVPVQ…PETGFYMLQL (193 aa). The interval 3093 to 3144 is disordered; that stretch reads AEETQESKPKPRDASLKQQDTGARGSGTSPDEGDAQDSSESARQQQEQTLRA. The segment covering 3097-3107 has biased composition (basic and acidic residues); the sequence is QESKPKPRDAS. Composition is skewed to polar residues over residues 3108-3121 and 3130-3144; these read LKQQ…SGTS and SSES…TLRA. Phosphoserine is present on S3220. Plectin repeat units follow at residues 3255–3297, 3298–3335, 3336–3373, 3374–3411, and 3415–3449; these read KRYL…PGTA, LVLL…GEIQ, EKLL…RDHG, IRLL…EDMN, and ADPG…PETG. 2 positions are modified to phosphoserine: S3460 and S3538. Positions 3608–3659 are disordered; sequence AEETQESKPKPRDASLKQQDTGARGSGTSPDEGDAQDSSESARQQQEQTLRA. Residues 3612–3622 show a composition bias toward basic and acidic residues; it reads QESKPKPRDAS. 2 stretches are compositionally biased toward polar residues: residues 3623 to 3636 and 3645 to 3659; these read LKQQ…SGTS and SSES…TLRA. The residue at position 3735 (S3735) is a Phosphoserine. 5 Plectin repeats span residues 3770 to 3812, 3813 to 3850, 3851 to 3888, 3889 to 3926, and 3930 to 3964; these read KRYL…PGTA, LVLL…GEIQ, EKLL…RDHG, IRLL…EDMN, and ADPG…PETG. Phosphoserine occurs at positions 3975 and 4053. Residues 4123–4174 form a disordered region; that stretch reads AEETQESKPKPRDASLKQQDTGARGSGTSPDEGDAQDSSESARQQQEQTLRA. Positions 4127 to 4137 are enriched in basic and acidic residues; that stretch reads QESKPKPRDAS. Polar residues-rich tracts occupy residues 4138–4151 and 4160–4174; these read LKQQ…SGTS and SSES…TLRA. Plectin repeat units follow at residues 4285 to 4327, 4328 to 4365, 4366 to 4403, 4404 to 4441, and 4445 to 4479; these read KRYL…PGTA, LVLL…GEIQ, EKLL…RDHG, IRLL…EDMN, and ADPG…PETG. The interval 4638–4689 is disordered; that stretch reads AEETQESKPKPRDASLKQQDTGARGSGTSPDEGDAQDSSESARQQQEQTLRA. The segment covering 4642–4652 has biased composition (basic and acidic residues); sequence QESKPKPRDAS. 2 stretches are compositionally biased toward polar residues: residues 4653-4666 and 4675-4689; these read LKQQ…SGTS and SSES…TLRA. At S4765 the chain carries Phosphoserine. 5 Plectin repeats span residues 4800–4842, 4843–4880, 4881–4918, 4919–4956, and 4960–4994; these read KRYL…PGTA, LVLL…GEIQ, EKLL…RDHG, IRLL…EDMN, and ADPG…PETG. 2 positions are modified to phosphoserine: S5005 and S5083. Residues 5153–5204 form a disordered region; it reads AEETQESKPKPRDASLKQQDTGARGSGTSPDEGDAQDSSESARQQQEQTLRA. Over residues 5157–5167 the composition is skewed to basic and acidic residues; sequence QESKPKPRDAS. 2 stretches are compositionally biased toward polar residues: residues 5168–5181 and 5190–5204; these read LKQQ…SGTS and SSES…TLRA. Plectin repeat units follow at residues 5315–5357, 5358–5395, 5396–5433, 5434–5471, and 5475–5509; these read KRYL…PGTA, LVLL…GEIQ, EKLL…RDHG, IRLL…EDMN, and ADPG…PETG. A disordered region spans residues 5668 to 5719; the sequence is AEETQESKPKPRDASLKQQDTGARGSGTSPDEGDAQDSSESARQQQEQTLRA. Basic and acidic residues predominate over residues 5672–5682; sequence QESKPKPRDAS. Polar residues-rich tracts occupy residues 5683 to 5696 and 5705 to 5719; these read LKQQ…SGTS and SSES…TLRA. S5795 carries the post-translational modification Phosphoserine. Plectin repeat units follow at residues 5830 to 5872, 5873 to 5910, 5911 to 5948, 5949 to 5986, and 5990 to 6024; these read KRYL…PGTA, LVLL…GEIQ, EKLL…RDHG, IRLL…EDMN, and ADPG…PETG. 2 positions are modified to phosphoserine: S6035 and S6113. Residues 6183-6234 form a disordered region; the sequence is AEETQESKPKPRDASLKQQDTGARGSGTSPDEGDAQDSSESARQQQEQTLRA. Positions 6187-6197 are enriched in basic and acidic residues; sequence QESKPKPRDAS. Polar residues-rich tracts occupy residues 6198-6211 and 6220-6234; these read LKQQ…SGTS and SSES…TLRA. Residue S6310 is modified to Phosphoserine. Plectin repeat units lie at residues 6345 to 6387, 6388 to 6425, 6426 to 6463, 6464 to 6501, and 6505 to 6539; these read KRYL…PGTA, LVLL…GEIQ, EKLL…KNHG, IRLL…QEMN, and ADPG…PETG.

Belongs to the plakin or cytolinker family. Interacts with KRT5, KRT14 and KRT5/KRT14 heterotetramer; interacts preferentially with assembled filaments rather than keratin monomers. Interacts with KRT8 and KRT18 and KRT8/KRT18 heterotetramer; interacts preferentially with assembled filaments rather than keratin monomers. Interacts with KRT1, VIM and DES; interaction is stronger with KRT1 than with VIM or DES; interaction is dependent of higher-order structure of intermediate filament. High levels in skin, small intestine and salivary gland. Lower levels in lung, uterus and liver. Not detected in brain, kidney, muscle, heart or spleen. In skin, expressed in all epidermal layers but not in the dermis. In intestine, expressed exclusively in the epithelial cell layer of the villi. In liver, expressed at hepatocyte margins. Around the region of the wound, expressed in the upper half of the epidermis. Weakly expressed on the basilar side of the suprabasal layer of the epidermis at the wound's edge. Expressed strongly in the upper layer of the epidermis, especially in larger keratinocytes. Expressed in undifferentiated primary keratinocytes. Strongly expressed in ductal cells, and also expressed in acinar cells. Expressed in hepatocytes and cholangiocytes.

Its subcellular location is the cytoplasm. It is found in the cytoskeleton. The protein resides in the apicolateral cell membrane. It localises to the basolateral cell membrane. The protein localises to the cell junction. Its subcellular location is the hemidesmosome. It is found in the tight junction. The protein resides in the cell projection. Cytoskeletal linker protein that connects to intermediate filaments and controls their reorganization in response to stress. In response to mechanical stress like wound healing, is associated with the machinery for cellular motility by slowing down keratinocyte migration and proliferation and accelerating keratin bundling in proliferating keratinocytes thus contributing to tissue architecture. However in wound healing in corneal epithelium also positively regulates cell differentiation and proliferation and negatively regulates migration thereby controlling corneal epithelium morphogenesis and integrity. In response to cellular stress, plays a role in keratin filament reorganization, probably by protecting keratin filaments against disruption. During liver and pancreas injuries, plays a protective role by chaperoning disease-induced intermediate filament reorganization. This Mus musculus (Mouse) protein is Epiplakin.